The primary structure comprises 288 residues: Bifunctional protein FolD (288 aa).

NADP(+)-binding positions include 166 to 168 (GAS) and Ile232.

Belongs to the tetrahydrofolate dehydrogenase/cyclohydrolase family. Homodimer.

It carries out the reaction (6R)-5,10-methylene-5,6,7,8-tetrahydrofolate + NADP(+) = (6R)-5,10-methenyltetrahydrofolate + NADPH. The catalysed reaction is (6R)-5,10-methenyltetrahydrofolate + H2O = (6R)-10-formyltetrahydrofolate + H(+). The protein operates within one-carbon metabolism; tetrahydrofolate interconversion. Catalyzes the oxidation of 5,10-methylenetetrahydrofolate to 5,10-methenyltetrahydrofolate and then the hydrolysis of 5,10-methenyltetrahydrofolate to 10-formyltetrahydrofolate. The polypeptide is Bifunctional protein FolD (Shigella dysenteriae serotype 1 (strain Sd197)).